Here is a 181-residue protein sequence, read N- to C-terminus: Inner membrane-spanning protein YciB (181 aa).

5 helical membrane-spanning segments follow: residues 8 to 28 (FPII…ATAA), 53 to 73 (ITLI…NAIF), 76 to 96 (WKPT…HFFG), 121 to 141 (LSWA…VYNF), and 149 to 169 (FKLF…AFYI).

Belongs to the YciB family.

Its subcellular location is the cell inner membrane. Its function is as follows. Plays a role in cell envelope biogenesis, maintenance of cell envelope integrity and membrane homeostasis. The chain is Inner membrane-spanning protein YciB from Coxiella burnetii (strain RSA 331 / Henzerling II).